The following is a 157-amino-acid chain: MTPRQRRLGLLAAALACCGVAAALVLNAFRANLVFFFSPSQVAAQEAPVARSFRLGGLVASGSIRREGDGMTVRFVVTDTARQVPVQYRGLLPDLFREGKGVVARGQLRADGTFVATEVLAKHDENYMPPEAAAALKQAGQANPGMAGAMAAQELRR.

Topologically, residues 1–7 are cytoplasmic; sequence MTPRQRR. Residues 8-28 traverse the membrane as a helical; Signal-anchor for type II membrane protein segment; sequence LGLLAAALACCGVAAALVLNA. The Periplasmic segment spans residues 29-157; that stretch reads FRANLVFFFS…GAMAAQELRR (129 aa). His-123 and Tyr-127 together coordinate heme.

Belongs to the CcmE/CycJ family.

It localises to the cell inner membrane. Functionally, heme chaperone required for the biogenesis of c-type cytochromes. Transiently binds heme delivered by CcmC and transfers the heme to apo-cytochromes in a process facilitated by CcmF and CcmH. This chain is Cytochrome c-type biogenesis protein CcmE, found in Cupriavidus taiwanensis (strain DSM 17343 / BCRC 17206 / CCUG 44338 / CIP 107171 / LMG 19424 / R1) (Ralstonia taiwanensis (strain LMG 19424)).